The chain runs to 341 residues: Putative casein kinase I C03C10.2 (341 aa).

The region spanning 50–326 (WSIEGVIGNG…KCLYSPKSLL (277 aa)) is the Protein kinase domain. Residues 56-64 (IGNGGYGQI) and K79 contribute to the ATP site. D173 functions as the Proton acceptor in the catalytic mechanism.

The protein belongs to the protein kinase superfamily. CK1 Ser/Thr protein kinase family. Casein kinase I subfamily.

The catalysed reaction is L-seryl-[protein] + ATP = O-phospho-L-seryl-[protein] + ADP + H(+). The enzyme catalyses L-threonyl-[protein] + ATP = O-phospho-L-threonyl-[protein] + ADP + H(+). This Caenorhabditis elegans protein is Putative casein kinase I C03C10.2.